The following is a 148-amino-acid chain: uncharacterized protein (148 aa).

Positions 38–99 (QFRRHHHAEH…RRHLRKGHLK (62 aa)) are disordered. Residues 64 to 82 (FHHDGGRHGHATRIHENNR) are compositionally biased toward basic and acidic residues. A compositionally biased stretch (basic residues) spans 83–99 (RPHKRNRRRHLRKGHLK).

This is an uncharacterized protein from Fowl adenovirus A serotype 1 (strain CELO / Phelps) (FAdV-1).